A 325-amino-acid chain; its full sequence is Acetyl-coenzyme A carboxylase carboxyl transferase subunit alpha (325 aa).

Residues 35–292 (EIEKLEARLA…DRVLRRSLKQ (258 aa)) form the CoA carboxyltransferase C-terminal domain.

This sequence belongs to the AccA family. In terms of assembly, acetyl-CoA carboxylase is a heterohexamer composed of biotin carboxyl carrier protein (AccB), biotin carboxylase (AccC) and two subunits each of ACCase subunit alpha (AccA) and ACCase subunit beta (AccD).

The protein localises to the cytoplasm. The catalysed reaction is N(6)-carboxybiotinyl-L-lysyl-[protein] + acetyl-CoA = N(6)-biotinyl-L-lysyl-[protein] + malonyl-CoA. Its pathway is lipid metabolism; malonyl-CoA biosynthesis; malonyl-CoA from acetyl-CoA: step 1/1. Functionally, component of the acetyl coenzyme A carboxylase (ACC) complex. First, biotin carboxylase catalyzes the carboxylation of biotin on its carrier protein (BCCP) and then the CO(2) group is transferred by the carboxyltransferase to acetyl-CoA to form malonyl-CoA. This chain is Acetyl-coenzyme A carboxylase carboxyl transferase subunit alpha, found in Geobacillus kaustophilus (strain HTA426).